Reading from the N-terminus, the 414-residue chain is 3-phosphoshikimate 1-carboxyvinyltransferase (414 aa).

3-phosphoshikimate contacts are provided by Lys-20, Ser-21, and Arg-25. Lys-20 serves as a coordination point for phosphoenolpyruvate. Gly-85 and Arg-113 together coordinate phosphoenolpyruvate. Residues Ser-154, Ser-155, Gln-156, Ser-181, Asp-296, and Lys-323 each coordinate 3-phosphoshikimate. Gln-156 is a phosphoenolpyruvate binding site. The active-site Proton acceptor is the Asp-296. Residues Arg-327, Arg-371, and Lys-395 each coordinate phosphoenolpyruvate.

It belongs to the EPSP synthase family. As to quaternary structure, monomer.

The protein localises to the cytoplasm. It catalyses the reaction 3-phosphoshikimate + phosphoenolpyruvate = 5-O-(1-carboxyvinyl)-3-phosphoshikimate + phosphate. Its pathway is metabolic intermediate biosynthesis; chorismate biosynthesis. Functionally, catalyzes the transfer of the enolpyruvyl moiety of phosphoenolpyruvate (PEP) to the 5-hydroxyl of shikimate-3-phosphate (S3P) to produce enolpyruvyl shikimate-3-phosphate and inorganic phosphate. This Saccharolobus islandicus (strain Y.G.57.14 / Yellowstone #1) (Sulfolobus islandicus) protein is 3-phosphoshikimate 1-carboxyvinyltransferase.